The chain runs to 954 residues: MNQPGGAAAPQADGASAAGRKSTASRERLKRSQKSTKVEGPEPVPAEASLSAEQGTMTEVKVKTELPDDYIQEVIWQGEAKEEKKAVSKDGTSDVPAEICVVIGGVRNQQTLDGKAPEGSPHGGSVRSRYSGTWIFDQALRYASGSYECGICGKKYKYYNCFQTHVRAHRDTEATSGEGASQSNNFRYTCDICGKKYKYYSCFQEHRDLHAVDVFSVEGAPENRADPFDQGVVATDEVKEEPPEPFQKIGPKTGNYTCEFCGKQYKYYTPYQEHVALHAPISTAPGWEPPDDPDTGSECSHPEVSPSPRFVAAKTQTNQSGKKAPASVVRCATLLHRTPPATQTQTFRTPNSGSPASKATAAESAFSRRVEGKAQNHFEETNSSSQNSSEPYTCGACGIQFQFYNNLLEHMQSHAADNENNIASNQSRSPPAVVEEKWKPQAQRNSANNTTTSGLTPNSMIPEKERQNIAERLLRVMCADLGALSVVSGKEFLKLAQTLVDSGARYGAFSVTEILGNFNTLALKHLPRMYNQVKVKVTCALGSNACLGIGVTCHSQSVGPDSCYILTAYQAEGNHIKSYVLGVKGADIRDSGDLVHHWVQNVLSEFVMSEIRTVYVTDCRVSTSAFSKAGMCLRCSACALNSVVQSVLSKRTLQARSMHEVIELLNVCEDLAGSTGLAKETFGSLEETSPPPCWNSVTDSLLLVHERYEQICEFYSRAKKMNLIQSLNKHLLSNLAAILTPVKQAVIELSNESQPTLQLVLPTYVRLEKLFTAKANDAGTVSKLCHLFLEALKENFKVHPAHKVAMILDPQQKLRPVPPYQHEEIIGKVCELINEVKESWAEEADFEPAAKKPRSAAVENPAAQEDDRLGKNEVYDYLQEPLFQATPDLFQYWSCVTQKHTKLAKLAFWLLAVPAVGARSGCVNMCEQALLIKRRRLLSPEDMNKLMFLKSNML.

Residue M1 is modified to N-acetylmethionine. Over residues 1-19 the composition is skewed to low complexity; it reads MNQPGGAAAPQADGASAAG. The disordered stretch occupies residues 1–56; the sequence is MNQPGGAAAPQADGASAAGRKSTASRERLKRSQKSTKVEGPEPVPAEASLSAEQGT. Glycyl lysine isopeptide (Lys-Gly) (interchain with G-Cter in SUMO2) cross-links involve residues K63 and K81. 2 consecutive C2H2-type zinc fingers follow at residues 147–169 and 188–210; these read YECG…VRAH and YTCD…RDLH. K239 participates in a covalent cross-link: Glycyl lysine isopeptide (Lys-Gly) (interchain with G-Cter in SUMO2). Residues 256–278 form a C2H2-type 3 zinc finger; sequence YTCEFCGKQYKYYTPYQEHVALH. Disordered stretches follow at residues 282-307 and 337-390; these read STAP…VSPS and RTPP…NSSE. Over residues 340–357 the composition is skewed to polar residues; that stretch reads PATQTQTFRTPNSGSPAS. The span at 366–380 shows a compositional bias: basic and acidic residues; it reads FSRRVEGKAQNHFEE. Residues 392–414 form a C2H2-type 4 zinc finger; that stretch reads YTCGACGIQFQFYNNLLEHMQSH. The interval 421 to 463 is disordered; it reads NIASNQSRSPPAVVEEKWKPQAQRNSANNTTTSGLTPNSMIPE. K437 is covalently cross-linked (Glycyl lysine isopeptide (Lys-Gly) (interchain with G-Cter in SUMO2)). Positions 442–459 are enriched in polar residues; that stretch reads AQRNSANNTTTSGLTPNS.

It belongs to the krueppel C2H2-type zinc-finger protein family. As to quaternary structure, interacts with UHRF2.

It is found in the nucleus. The protein localises to the chromosome. Functionally, regulates UHRF2 function as a specific 5-hydroxymethylcytosine (5hmC) reader by regulating its chromatin localization. The chain is Zinc finger protein 618 (ZNF618) from Homo sapiens (Human).